The sequence spans 469 residues: Protein apterous (469 aa).

2 disordered regions span residues 21–44 and 111–141; these read GPGAREKSPTPPVAHQGSNQCGSA and EVSDETTSGISFKTEPFGPPSSPESTSDSKI. 2 consecutive LIM zinc-binding domains span residues 148–200 and 210–263; these read CSGC…CKND and CSRC…CRTH. A DNA-binding region (homeobox) is located at residues 367–426; it reads TKRMRTSFKHHQLRTMKSYFAINHNPDAKDLKQLSQKTGLPKRVLQVWFQNARAKWRRMM.

In terms of tissue distribution, expressed in PNS and CNS.

It localises to the nucleus. Functionally, required for the normal development of the wing and halter imaginal disks. This chain is Protein apterous (ap), found in Drosophila melanogaster (Fruit fly).